We begin with the raw amino-acid sequence, 353 residues long: Protein-glutamate methylesterase/protein-glutamine glutaminase 3 (353 aa).

A Response regulatory domain is found at K3–A120. D54 is subject to 4-aspartylphosphate. One can recognise a CheB-type methylesterase domain in the interval P158 to R353. Catalysis depends on residues S173, H200, and D296.

This sequence belongs to the CheB family. Post-translationally, phosphorylated by CheA. Phosphorylation of the N-terminal regulatory domain activates the methylesterase activity.

It is found in the cytoplasm. The enzyme catalyses [protein]-L-glutamate 5-O-methyl ester + H2O = L-glutamyl-[protein] + methanol + H(+). It carries out the reaction L-glutaminyl-[protein] + H2O = L-glutamyl-[protein] + NH4(+). In terms of biological role, involved in chemotaxis. Part of a chemotaxis signal transduction system that modulates chemotaxis in response to various stimuli. Catalyzes the demethylation of specific methylglutamate residues introduced into the chemoreceptors (methyl-accepting chemotaxis proteins or MCP) by CheR. Also mediates the irreversible deamidation of specific glutamine residues to glutamic acid. The protein is Protein-glutamate methylesterase/protein-glutamine glutaminase 3 of Syntrophomonas wolfei subsp. wolfei (strain DSM 2245B / Goettingen).